A 230-amino-acid polypeptide reads, in one-letter code: Triggering receptor expressed on myeloid cells 1 (230 aa).

Residues 1-20 form the signal peptide; the sequence is MRKAGLWGLLCVFFVSEVKA. The Ig-like V-type domain occupies 21–124; sequence AIVLEEERYD…IYHPPNDPVV (104 aa). Topologically, residues 21–202 are extracellular; it reads AIVLEEERYD…TDADSVSTSS (182 aa). Cys-41 and Cys-113 are disulfide-bonded. Asn-191 carries an N-linked (GlcNAc...) asparagine glycan. A helical transmembrane segment spans residues 203 to 223; it reads VTISVICGLLSKSLVFIILFI. The Cytoplasmic portion of the chain corresponds to 224-230; it reads VTKRTFG.

In terms of assembly, monomer. Homomultimer; when activated. Interacts with TYROBP/DAP12. Interacts with TLR4.

The protein localises to the cell membrane. In terms of biological role, cell surface receptor that plays important roles in innate and adaptive immunity by amplifying inflammatory responses. Upon activation by various ligands such as PGLYRP1, HMGB1 or HSP70, multimerizes and forms a complex with transmembrane adapter TYROBP/DAP12. In turn, initiates a SYK-mediated cascade of tyrosine phosphorylation, activating multiple downstream mediators such as BTK, MAPK1, MAPK3 or phospholipase C-gamma. This cascade promotes the neutrophil- and macrophage-mediated release of pro-inflammatory cytokines and/or chemokines, as well as their migration and thereby amplifies inflammatory responses that are triggered by bacterial and fungal infections. By also promoting the amplification of inflammatory signals that are initially triggered by Toll-like receptor (TLR) and NOD-like receptor engagement, plays a major role in the pathophysiology of acute and chronic inflammatory diseases of different etiologies including septic shock and atherosclerosis. The protein is Triggering receptor expressed on myeloid cells 1 (Trem1) of Mus musculus (Mouse).